A 991-amino-acid polypeptide reads, in one-letter code: Translation initiation factor IF-2 (991 aa).

3 disordered regions span residues 53 to 85 (SHGT…KART), 97 to 175 (VKRD…EAAE), and 312 to 395 (GIKG…DRGG). Composition is skewed to basic and acidic residues over residues 97-113 (VKRD…HDSQ) and 125-175 (ELQR…EAAE). Low complexity predominate over residues 323–338 (AAGAPAPGAAPGAAAK). Over residues 339–349 (PGEKKSVKSEK) the composition is skewed to basic and acidic residues. The region spanning 491 to 658 (PRPPVVTVMG…QVLLQAEVLE (168 aa)) is the tr-type G domain. A G1 region spans residues 500–507 (GHVDHGKT). GTP is bound at residue 500–507 (GHVDHGKT). The tract at residues 525–529 (GITQH) is G2. A G3 region spans residues 546 to 549 (DTPG). Residues 546 to 550 (DTPGH) and 600 to 603 (NKID) contribute to the GTP site. The G4 stretch occupies residues 600–603 (NKID). Positions 636-638 (SAK) are G5.

It belongs to the TRAFAC class translation factor GTPase superfamily. Classic translation factor GTPase family. IF-2 subfamily.

The protein localises to the cytoplasm. Its function is as follows. One of the essential components for the initiation of protein synthesis. Protects formylmethionyl-tRNA from spontaneous hydrolysis and promotes its binding to the 30S ribosomal subunits. Also involved in the hydrolysis of GTP during the formation of the 70S ribosomal complex. This chain is Translation initiation factor IF-2, found in Leptothrix cholodnii (strain ATCC 51168 / LMG 8142 / SP-6) (Leptothrix discophora (strain SP-6)).